The primary structure comprises 248 residues: Pyridoxine 5'-phosphate synthase (248 aa).

Residue Asn7 coordinates 3-amino-2-oxopropyl phosphate. 9-10 is a binding site for 1-deoxy-D-xylulose 5-phosphate; that stretch reads DH. Arg18 contacts 3-amino-2-oxopropyl phosphate. His43 (proton acceptor) is an active-site residue. 1-deoxy-D-xylulose 5-phosphate contacts are provided by Arg45 and His50. The active-site Proton acceptor is Glu70. Residue Thr100 participates in 1-deoxy-D-xylulose 5-phosphate binding. His191 acts as the Proton donor in catalysis. 3-amino-2-oxopropyl phosphate is bound by residues Gly192 and 213–214; that span reads GH.

This sequence belongs to the PNP synthase family. Homooctamer; tetramer of dimers.

Its subcellular location is the cytoplasm. The catalysed reaction is 3-amino-2-oxopropyl phosphate + 1-deoxy-D-xylulose 5-phosphate = pyridoxine 5'-phosphate + phosphate + 2 H2O + H(+). The protein operates within cofactor biosynthesis; pyridoxine 5'-phosphate biosynthesis; pyridoxine 5'-phosphate from D-erythrose 4-phosphate: step 5/5. Its function is as follows. Catalyzes the complicated ring closure reaction between the two acyclic compounds 1-deoxy-D-xylulose-5-phosphate (DXP) and 3-amino-2-oxopropyl phosphate (1-amino-acetone-3-phosphate or AAP) to form pyridoxine 5'-phosphate (PNP) and inorganic phosphate. The sequence is that of Pyridoxine 5'-phosphate synthase from Bordetella bronchiseptica (strain ATCC BAA-588 / NCTC 13252 / RB50) (Alcaligenes bronchisepticus).